Reading from the N-terminus, the 263-residue chain is Hydroxyacylglutathione hydrolase (263 aa).

7 residues coordinate Zn(2+): His-55, His-57, Asp-59, His-60, His-117, Asp-134, and His-172.

This sequence belongs to the metallo-beta-lactamase superfamily. Glyoxalase II family. In terms of assembly, monomer. The cofactor is Zn(2+).

The enzyme catalyses an S-(2-hydroxyacyl)glutathione + H2O = a 2-hydroxy carboxylate + glutathione + H(+). The protein operates within secondary metabolite metabolism; methylglyoxal degradation; (R)-lactate from methylglyoxal: step 2/2. In terms of biological role, thiolesterase that catalyzes the hydrolysis of S-D-lactoyl-glutathione to form glutathione and D-lactic acid. This chain is Hydroxyacylglutathione hydrolase, found in Shewanella baltica (strain OS195).